The primary structure comprises 449 residues: Putative BTB/POZ domain-containing protein L742 (449 aa).

Residues 79–148 (EDGYVYINIG…LTMSNQELSG (70 aa)) form the BTB domain.

The protein belongs to the mimivirus BTB/WD family.

This chain is Putative BTB/POZ domain-containing protein L742, found in Acanthamoeba polyphaga mimivirus (APMV).